An 806-amino-acid chain; its full sequence is Ankyrin repeat, bromo and BTB domain-containing protein DDB_G0293800 (806 aa).

ANK repeat units lie at residues 1–30 (MSNK…DVNQ), 34–63 (SNRY…LVNC), 67–96 (RGAT…DVNC), 100–130 (AGST…DVNL), and 134–163 (EGST…RADV). Basic and acidic residues predominate over residues 210-228 (GVGKKEDDDNNMKIDKQES). A disordered region spans residues 210–231 (GVGKKEDDDNNMKIDKQESEQQ). Residues 239–307 (SDITFLIENQ…IYTGSIEKFE (69 aa)) enclose the BTB domain. Disordered stretches follow at residues 423–517 (TRTA…SDSM) and 621–743 (QNFP…EERR). Composition is skewed to low complexity over residues 426-436 (ANANASNSNQS) and 443-511 (TSTT…SSSS). Residues 516–622 (SMNEKNLTFC…NAFDQKFLQN (107 aa)) form the Bromo domain. Pro residues predominate over residues 626–641 (EKPPTYKPPPPTPTPI). Positions 642-658 (PTQQQQQQSTSSTSTPT) are enriched in low complexity. The span at 666–675 (DEHVKVKEDT) shows a compositional bias: basic and acidic residues. Residues 676-693 (NSAQPTSSSSNHTNGENA) are compositionally biased toward polar residues. The span at 694 to 733 (SSSSSSSSSKQSNNNNNNNNNNNSNSTTNSSSSSSSTTTT) shows a compositional bias: low complexity. Residues 727–806 (SSSTTTTQKK…ECFKKQKQDE (80 aa)) enclose the NET domain.

The protein is Ankyrin repeat, bromo and BTB domain-containing protein DDB_G0293800 of Dictyostelium discoideum (Social amoeba).